A 1015-amino-acid polypeptide reads, in one-letter code: Condensin complex subunit 3 (1015 aa).

HEAT repeat units follow at residues 94–131 (GLLN…SMPE), 138–173 (DVFD…QDPK), 174–212 (DDEC…TLPK), 238–275 (MRAM…GWLR), and 276–313 (FSEG…LSEL). A Phosphoserine modification is found at Ser-390. 3 HEAT repeats span residues 399-436 (EFIG…LPTI), 439-478 (SLVS…TVGV), and 617-654 (DFAR…TFGI). At Ser-674 the chain carries Phosphoserine. HEAT repeat units follow at residues 687–724 (ATAK…SGLL) and 865–907 (KDLL…QAEA). A Phosphothreonine modification is found at Thr-931. The span at 941-950 (ASKSTQLKTN) shows a compositional bias: polar residues. The interval 941-994 (ASKSTQLKTNRGQRKVTVSARTNRRCQTAEADSESDHEVPEPESEMKMRLPRRA) is disordered. Residues Ser-973, Ser-975, Ser-1002, and Ser-1015 each carry the phosphoserine modification. Residues 974-988 (ESDHEVPEPESEMKM) are compositionally biased toward basic and acidic residues.

This sequence belongs to the CND3 (condensin subunit 3) family. Component of the condensin complex, which contains the SMC2 and SMC4 heterodimer, and three non SMC subunits that probably regulate the complex: NCAPH/BRRN1, NCAPD2/CAPD2 and NCAPG. Post-translationally, phosphorylated by CDK1. Its phosphorylation, as well as that of NCAPD2 and NCAPH subunits, activates the condensin complex and is required for chromosome condensation. As to expression, highly expressed in testis.

It localises to the nucleus. Its subcellular location is the cytoplasm. It is found in the chromosome. Regulatory subunit of the condensin complex, a complex required for conversion of interphase chromatin into mitotic-like condense chromosomes. The condensin complex probably introduces positive supercoils into relaxed DNA in the presence of type I topoisomerases and converts nicked DNA into positive knotted forms in the presence of type II topoisomerases. This chain is Condensin complex subunit 3 (NCAPG), found in Homo sapiens (Human).